Here is a 218-residue protein sequence, read N- to C-terminus: Probable septum site-determining protein MinC (218 aa).

This sequence belongs to the MinC family. As to quaternary structure, interacts with MinD and FtsZ.

Functionally, cell division inhibitor that blocks the formation of polar Z ring septums. Rapidly oscillates between the poles of the cell to destabilize FtsZ filaments that have formed before they mature into polar Z rings. Prevents FtsZ polymerization. This is Probable septum site-determining protein MinC from Kosmotoga olearia (strain ATCC BAA-1733 / DSM 21960 / TBF 19.5.1).